The following is a 488-amino-acid chain: Protein nucleotidyltransferase YdiU (488 aa).

Glycine 91, glycine 93, arginine 94, lysine 114, aspartate 126, glycine 127, arginine 177, and arginine 184 together coordinate ATP. The Proton acceptor role is filled by aspartate 253. Mg(2+)-binding residues include asparagine 254 and aspartate 263. Residue aspartate 263 participates in ATP binding.

This sequence belongs to the SELO family. Mg(2+) is required as a cofactor. Requires Mn(2+) as cofactor.

The enzyme catalyses L-seryl-[protein] + ATP = 3-O-(5'-adenylyl)-L-seryl-[protein] + diphosphate. It carries out the reaction L-threonyl-[protein] + ATP = 3-O-(5'-adenylyl)-L-threonyl-[protein] + diphosphate. It catalyses the reaction L-tyrosyl-[protein] + ATP = O-(5'-adenylyl)-L-tyrosyl-[protein] + diphosphate. The catalysed reaction is L-histidyl-[protein] + UTP = N(tele)-(5'-uridylyl)-L-histidyl-[protein] + diphosphate. The enzyme catalyses L-seryl-[protein] + UTP = O-(5'-uridylyl)-L-seryl-[protein] + diphosphate. It carries out the reaction L-tyrosyl-[protein] + UTP = O-(5'-uridylyl)-L-tyrosyl-[protein] + diphosphate. Functionally, nucleotidyltransferase involved in the post-translational modification of proteins. It can catalyze the addition of adenosine monophosphate (AMP) or uridine monophosphate (UMP) to a protein, resulting in modifications known as AMPylation and UMPylation. The chain is Protein nucleotidyltransferase YdiU from Bacillus thuringiensis (strain Al Hakam).